A 51-amino-acid polypeptide reads, in one-letter code: Large ribosomal subunit protein bL33 (51 aa).

Belongs to the bacterial ribosomal protein bL33 family.

The protein is Large ribosomal subunit protein bL33 of Marinobacter nauticus (strain ATCC 700491 / DSM 11845 / VT8) (Marinobacter aquaeolei).